The sequence spans 234 residues: Glucosamine-6-phosphate deaminase (234 aa).

The active-site Proton acceptor; for enolization step is the aspartate 62. Asparagine 128 serves as the catalytic For ring-opening step. Histidine 130 (proton acceptor; for ring-opening step) is an active-site residue. Catalysis depends on glutamate 135, which acts as the For ring-opening step.

This sequence belongs to the glucosamine/galactosamine-6-phosphate isomerase family. NagB subfamily.

It catalyses the reaction alpha-D-glucosamine 6-phosphate + H2O = beta-D-fructose 6-phosphate + NH4(+). The protein operates within amino-sugar metabolism; N-acetylneuraminate degradation; D-fructose 6-phosphate from N-acetylneuraminate: step 5/5. Functionally, catalyzes the reversible isomerization-deamination of glucosamine 6-phosphate (GlcN6P) to form fructose 6-phosphate (Fru6P) and ammonium ion. The sequence is that of Glucosamine-6-phosphate deaminase from Streptococcus equi subsp. zooepidemicus (strain MGCS10565).